Here is a 166-residue protein sequence, read N- to C-terminus: Small ribosomal subunit protein uS5 (166 aa).

The 64-residue stretch at 11 to 74 (LQEKLIAVNR…EKARRNMMNV (64 aa)) folds into the S5 DRBM domain.

It belongs to the universal ribosomal protein uS5 family. Part of the 30S ribosomal subunit. Contacts proteins S4 and S8.

With S4 and S12 plays an important role in translational accuracy. Its function is as follows. Located at the back of the 30S subunit body where it stabilizes the conformation of the head with respect to the body. This is Small ribosomal subunit protein uS5 from Buchnera aphidicola subsp. Acyrthosiphon kondoi (Acyrthosiphon kondoi symbiotic bacterium).